A 456-amino-acid polypeptide reads, in one-letter code: Bifunctional protein GlmU (456 aa).

The pyrophosphorylase stretch occupies residues Met1–Arg229. Residues Leu11–Gly14, Lys25, Gln76, Gly81–Thr82, Tyr103–Asp105, Gly140, Glu154, Asn169, and Asn227 contribute to the UDP-N-acetyl-alpha-D-glucosamine site. A Mg(2+)-binding site is contributed by Asp105. Asn227 serves as a coordination point for Mg(2+). The segment at Leu230–Glu250 is linker. The interval Gly251 to Lys456 is N-acetyltransferase. The UDP-N-acetyl-alpha-D-glucosamine site is built by Arg333 and Lys351. His363 acts as the Proton acceptor in catalysis. UDP-N-acetyl-alpha-D-glucosamine is bound by residues Tyr366 and Asn377. Acetyl-CoA-binding positions include Ala380, Asn386–Tyr387, Ser405, Ala423, and Arg440.

It in the N-terminal section; belongs to the N-acetylglucosamine-1-phosphate uridyltransferase family. This sequence in the C-terminal section; belongs to the transferase hexapeptide repeat family. In terms of assembly, homotrimer. Mg(2+) serves as cofactor.

The protein localises to the cytoplasm. The enzyme catalyses alpha-D-glucosamine 1-phosphate + acetyl-CoA = N-acetyl-alpha-D-glucosamine 1-phosphate + CoA + H(+). It carries out the reaction N-acetyl-alpha-D-glucosamine 1-phosphate + UTP + H(+) = UDP-N-acetyl-alpha-D-glucosamine + diphosphate. It participates in nucleotide-sugar biosynthesis; UDP-N-acetyl-alpha-D-glucosamine biosynthesis; N-acetyl-alpha-D-glucosamine 1-phosphate from alpha-D-glucosamine 6-phosphate (route II): step 2/2. It functions in the pathway nucleotide-sugar biosynthesis; UDP-N-acetyl-alpha-D-glucosamine biosynthesis; UDP-N-acetyl-alpha-D-glucosamine from N-acetyl-alpha-D-glucosamine 1-phosphate: step 1/1. Its pathway is bacterial outer membrane biogenesis; LPS lipid A biosynthesis. Its function is as follows. Catalyzes the last two sequential reactions in the de novo biosynthetic pathway for UDP-N-acetylglucosamine (UDP-GlcNAc). The C-terminal domain catalyzes the transfer of acetyl group from acetyl coenzyme A to glucosamine-1-phosphate (GlcN-1-P) to produce N-acetylglucosamine-1-phosphate (GlcNAc-1-P), which is converted into UDP-GlcNAc by the transfer of uridine 5-monophosphate (from uridine 5-triphosphate), a reaction catalyzed by the N-terminal domain. This Haemophilus influenzae (strain PittEE) protein is Bifunctional protein GlmU.